The primary structure comprises 283 residues: Elongation factor Ts (283 aa).

The involved in Mg(2+) ion dislocation from EF-Tu stretch occupies residues T79–V82.

This sequence belongs to the EF-Ts family.

Its subcellular location is the cytoplasm. Functionally, associates with the EF-Tu.GDP complex and induces the exchange of GDP to GTP. It remains bound to the aminoacyl-tRNA.EF-Tu.GTP complex up to the GTP hydrolysis stage on the ribosome. This chain is Elongation factor Ts, found in Shewanella sp. (strain ANA-3).